A 275-amino-acid polypeptide reads, in one-letter code: NH(3)-dependent NAD(+) synthetase (275 aa).

43 to 50 is a binding site for ATP; the sequence is GISGGVDS. Asp-49 contacts Mg(2+). Arg-145 is a binding site for deamido-NAD(+). Thr-165 provides a ligand contact to ATP. Position 170 (Glu-170) interacts with Mg(2+). Residues Lys-178 and Asp-185 each coordinate deamido-NAD(+). Residues Lys-194 and Thr-216 each coordinate ATP. Deamido-NAD(+) is bound at residue 265–266; it reads HK.

This sequence belongs to the NAD synthetase family. In terms of assembly, homodimer.

It carries out the reaction deamido-NAD(+) + NH4(+) + ATP = AMP + diphosphate + NAD(+) + H(+). The protein operates within cofactor biosynthesis; NAD(+) biosynthesis; NAD(+) from deamido-NAD(+) (ammonia route): step 1/1. In terms of biological role, catalyzes the ATP-dependent amidation of deamido-NAD to form NAD. Uses ammonia as a nitrogen source. The protein is NH(3)-dependent NAD(+) synthetase of Shewanella denitrificans (strain OS217 / ATCC BAA-1090 / DSM 15013).